Reading from the N-terminus, the 102-residue chain is N(4)-acetylcytidine amidohydrolase (102 aa).

The ASCH domain occupies 6–92 (TFFGRFEADI…VIKAIYPGLD (87 aa)). Lysine 20 acts as the Proton acceptor in catalysis. Threonine 23 acts as the Nucleophile in catalysis. The active-site Proton donor is the glutamate 73.

It belongs to the N(4)-acetylcytidine amidohydrolase family.

It carries out the reaction N(4)-acetylcytidine + H2O = cytidine + acetate + H(+). The enzyme catalyses N(4)-acetyl-2'-deoxycytidine + H2O = 2'-deoxycytidine + acetate + H(+). It catalyses the reaction N(4)-acetylcytosine + H2O = cytosine + acetate + H(+). Functionally, catalyzes the hydrolysis of N(4)-acetylcytidine (ac4C). The sequence is that of N(4)-acetylcytidine amidohydrolase from Yersinia pseudotuberculosis serotype O:1b (strain IP 31758).